Here is a 161-residue protein sequence, read N- to C-terminus: Disulfide bond formation protein B (161 aa).

Over 1–8 (MQANSRAY) the chain is Cytoplasmic. Residues 9–25 (FLLIALVSFGLVGVALY) form a helical membrane-spanning segment. Over 26 to 43 (LQFEKGYQPCPLCVMQRF) the chain is Periplasmic. Residues C35 and C38 are joined by a disulfide bond. Residues 44–58 (AFIGIGIFSLLAAVA) form a helical membrane-spanning segment. Topologically, residues 59-63 (QNTRS) are cytoplasmic. Residues 64-81 (LWQGLGMLSGIAGIAVAV) form a helical membrane-spanning segment. The Periplasmic segment spans residues 82–136 (YHVSLLLNPKASCGIDPLENWVNALPTAKALPQVFYADGLCTAPLPPVLGLSVPA). C94 and C122 are oxidised to a cystine. A helical transmembrane segment spans residues 137-155 (WSLIWLFILTLTLAVGLIR). Residues 156-161 (REKNFR) lie on the Cytoplasmic side of the membrane.

Belongs to the DsbB family.

The protein resides in the cell inner membrane. Functionally, required for disulfide bond formation in some periplasmic proteins. Acts by oxidizing the DsbA protein. The protein is Disulfide bond formation protein B of Cupriavidus necator (strain ATCC 17699 / DSM 428 / KCTC 22496 / NCIMB 10442 / H16 / Stanier 337) (Ralstonia eutropha).